The sequence spans 362 residues: Peptide chain release factor 1 (362 aa).

The residue at position 236 (Q236) is an N5-methylglutamine.

The protein belongs to the prokaryotic/mitochondrial release factor family. Methylated by PrmC. Methylation increases the termination efficiency of RF1.

It is found in the cytoplasm. Peptide chain release factor 1 directs the termination of translation in response to the peptide chain termination codons UAG and UAA. The chain is Peptide chain release factor 1 from Lactobacillus helveticus (strain DPC 4571).